Reading from the N-terminus, the 190-residue chain is Adenylate kinase (190 aa).

Residue 11–16 coordinates ATP; it reads GAGKGT. The tract at residues 31 to 60 is NMP; it reads STGDIFRFNIKNETELGKLAKTFMDKGDLV. AMP contacts are provided by residues Thr-32, Arg-37, 58–60, 86–89, and Gln-93; these read DLV and GFPR. Residues 127 to 137 are LID; that stretch reads ERGKTSGRVDD. Arg-128 is a binding site for ATP. Arg-134 and Arg-146 together coordinate AMP. Gly-174 provides a ligand contact to ATP.

This sequence belongs to the adenylate kinase family. As to quaternary structure, monomer.

It is found in the cytoplasm. The catalysed reaction is AMP + ATP = 2 ADP. The protein operates within purine metabolism; AMP biosynthesis via salvage pathway; AMP from ADP: step 1/1. Its function is as follows. Catalyzes the reversible transfer of the terminal phosphate group between ATP and AMP. Plays an important role in cellular energy homeostasis and in adenine nucleotide metabolism. This chain is Adenylate kinase, found in Flavobacterium psychrophilum (strain ATCC 49511 / DSM 21280 / CIP 103535 / JIP02/86).